Reading from the N-terminus, the 237-residue chain is Large ribosomal subunit protein uL3 (237 aa).

2 disordered regions span residues 133–155 and 213–237; these read ASHG…DPGK and PENA…EGAE. Polar residues predominate over residues 135–150; that stretch reads HGNSITHRSHGSTGQR. The residue at position 151 (glutamine 151) is an N5-methylglutamine. Over residues 220–237 the composition is skewed to low complexity; the sequence is AGLRAGAKAEAAATEGAE.

Belongs to the universal ribosomal protein uL3 family. In terms of assembly, part of the 50S ribosomal subunit. Forms a cluster with proteins L14 and L19. Methylated by PrmB.

In terms of biological role, one of the primary rRNA binding proteins, it binds directly near the 3'-end of the 23S rRNA, where it nucleates assembly of the 50S subunit. The protein is Large ribosomal subunit protein uL3 of Brucella suis biovar 1 (strain 1330).